Reading from the N-terminus, the 465-residue chain is ATP synthase subunit beta (465 aa).

148–155 (GGAGVGKT) is a binding site for ATP.

Belongs to the ATPase alpha/beta chains family. As to quaternary structure, F-type ATPases have 2 components, CF(1) - the catalytic core - and CF(0) - the membrane proton channel. CF(1) has five subunits: alpha(3), beta(3), gamma(1), delta(1), epsilon(1). CF(0) has three main subunits: a(1), b(2) and c(9-12). The alpha and beta chains form an alternating ring which encloses part of the gamma chain. CF(1) is attached to CF(0) by a central stalk formed by the gamma and epsilon chains, while a peripheral stalk is formed by the delta and b chains.

Its subcellular location is the cell inner membrane. The enzyme catalyses ATP + H2O + 4 H(+)(in) = ADP + phosphate + 5 H(+)(out). In terms of biological role, produces ATP from ADP in the presence of a proton gradient across the membrane. The catalytic sites are hosted primarily by the beta subunits. This is ATP synthase subunit beta from Neisseria gonorrhoeae (strain ATCC 700825 / FA 1090).